The primary structure comprises 85 residues: Homeobox protein liguleless 3 (85 aa).

Residues 1-21 form the ELK domain; the sequence is ELKEMLLKKYSGCLSRLRSEF. The homeobox; TALE-type DNA-binding region spans 22 to 85; sequence LKKRKKGKLP…NQRKRHWKPS (64 aa).

Belongs to the TALE/KNOX homeobox family.

The protein localises to the nucleus. Its function is as follows. Probably binds to the DNA sequence 5'-TGAC-3'. In Zea mays (Maize), this protein is Homeobox protein liguleless 3 (LG3).